The primary structure comprises 325 residues: Holliday junction branch migration complex subunit RuvB (325 aa).

Positions 1 to 181 are large ATPase domain (RuvB-L); it reads MENRLINPVE…FGIVQRLEFY (181 aa). ATP is bound by residues I20, R21, G62, K65, T66, T67, 128–130, R171, Y181, and R218; that span reads EDF. T66 contacts Mg(2+). Positions 182-252 are small ATPAse domain (RuvB-S); it reads NIEDLTTIVS…IADSALDMLA (71 aa). Positions 255–325 are head domain (RuvB-H); the sequence is RRGLDHLDRR…VLTQMAIDQL (71 aa). R291, R310, and R315 together coordinate DNA.

This sequence belongs to the RuvB family. Homohexamer. Forms an RuvA(8)-RuvB(12)-Holliday junction (HJ) complex. HJ DNA is sandwiched between 2 RuvA tetramers; dsDNA enters through RuvA and exits via RuvB. An RuvB hexamer assembles on each DNA strand where it exits the tetramer. Each RuvB hexamer is contacted by two RuvA subunits (via domain III) on 2 adjacent RuvB subunits; this complex drives branch migration. In the full resolvosome a probable DNA-RuvA(4)-RuvB(12)-RuvC(2) complex forms which resolves the HJ.

Its subcellular location is the cytoplasm. It catalyses the reaction ATP + H2O = ADP + phosphate + H(+). Its function is as follows. The RuvA-RuvB-RuvC complex processes Holliday junction (HJ) DNA during genetic recombination and DNA repair, while the RuvA-RuvB complex plays an important role in the rescue of blocked DNA replication forks via replication fork reversal (RFR). RuvA specifically binds to HJ cruciform DNA, conferring on it an open structure. The RuvB hexamer acts as an ATP-dependent pump, pulling dsDNA into and through the RuvAB complex. RuvB forms 2 homohexamers on either side of HJ DNA bound by 1 or 2 RuvA tetramers; 4 subunits per hexamer contact DNA at a time. Coordinated motions by a converter formed by DNA-disengaged RuvB subunits stimulates ATP hydrolysis and nucleotide exchange. Immobilization of the converter enables RuvB to convert the ATP-contained energy into a lever motion, pulling 2 nucleotides of DNA out of the RuvA tetramer per ATP hydrolyzed, thus driving DNA branch migration. The RuvB motors rotate together with the DNA substrate, which together with the progressing nucleotide cycle form the mechanistic basis for DNA recombination by continuous HJ branch migration. Branch migration allows RuvC to scan DNA until it finds its consensus sequence, where it cleaves and resolves cruciform DNA. The polypeptide is Holliday junction branch migration complex subunit RuvB (Psychrobacter sp. (strain PRwf-1)).